A 291-amino-acid polypeptide reads, in one-letter code: S-methyl-5'-thioadenosine phosphorylase (291 aa).

Residues Ser12, 54–55, and 87–88 each bind phosphate; these read RH and SA. Substrate is bound at residue Met185. Thr186 lines the phosphate pocket. 209 to 211 is a binding site for substrate; it reads DFD.

This sequence belongs to the PNP/MTAP phosphorylase family. MTAP subfamily. Homohexamer. Dimer of a homotrimer.

The enzyme catalyses S-methyl-5'-thioadenosine + phosphate = 5-(methylsulfanyl)-alpha-D-ribose 1-phosphate + adenine. The protein operates within amino-acid biosynthesis; L-methionine biosynthesis via salvage pathway; S-methyl-5-thio-alpha-D-ribose 1-phosphate from S-methyl-5'-thioadenosine (phosphorylase route): step 1/1. Its function is as follows. Catalyzes the reversible phosphorylation of S-methyl-5'-thioadenosine (MTA) to adenine and 5-methylthioribose-1-phosphate. Involved in the breakdown of MTA, a major by-product of polyamine biosynthesis. Responsible for the first step in the methionine salvage pathway after MTA has been generated from S-adenosylmethionine. Has broad substrate specificity with 6-aminopurine nucleosides as preferred substrates. This is S-methyl-5'-thioadenosine phosphorylase from Bradyrhizobium diazoefficiens (strain JCM 10833 / BCRC 13528 / IAM 13628 / NBRC 14792 / USDA 110).